The chain runs to 191 residues: Transcription factor FapR (191 aa).

This sequence belongs to the FapR family.

Transcriptional factor involved in regulation of membrane lipid biosynthesis by repressing genes involved in fatty acid and phospholipid metabolism. The polypeptide is Transcription factor FapR (Oceanobacillus iheyensis (strain DSM 14371 / CIP 107618 / JCM 11309 / KCTC 3954 / HTE831)).